A 322-amino-acid chain; its full sequence is Adenine deaminase (322 aa).

Zn(2+)-binding residues include His-11, His-13, and His-189. Catalysis depends on Glu-192, which acts as the Proton donor. Asp-270 serves as a coordination point for Zn(2+). Residue Asp-271 coordinates substrate.

The protein belongs to the metallo-dependent hydrolases superfamily. Adenosine and AMP deaminases family. Adenine deaminase type 2 subfamily. Zn(2+) serves as cofactor.

The catalysed reaction is adenine + H2O + H(+) = hypoxanthine + NH4(+). Functionally, catalyzes the hydrolytic deamination of adenine to hypoxanthine. Plays an important role in the purine salvage pathway and in nitrogen catabolism. This Rhizobium leguminosarum bv. trifolii (strain WSM2304) protein is Adenine deaminase.